The sequence spans 484 residues: Putative tyramine receptor 2 (484 aa).

Residues Met-1–Thr-54 lie on the Extracellular side of the membrane. N-linked (GlcNAc...) asparagine glycosylation occurs at Asn-13. The chain crosses the membrane as a helical span at residues Ala-55 to Phe-77. The Cytoplasmic segment spans residues Thr-78–Asn-87. Residues Phe-88 to Val-109 form a helical membrane-spanning segment. The Extracellular segment spans residues Ala-110–Met-126. A disulfide bond links Cys-124 and Cys-203. Residues Trp-127 to Leu-147 form a helical membrane-spanning segment. At Asp-148–Arg-167 the chain is on the cytoplasmic side. Residues Val-168–Trp-190 traverse the membrane as a helical segment. Topologically, residues Asn-191–Ser-215 are extracellular. Residue Asn-198 is glycosylated (N-linked (GlcNAc...) asparagine). Residues Ser-216–Ala-237 form a helical membrane-spanning segment. Over Thr-238–Thr-411 the chain is Cytoplasmic. Polar residues predominate over residues Ser-253–Thr-280. 2 disordered regions span residues Ser-253–Val-322 and Thr-350–Val-383. Basic residues predominate over residues Glu-295–Lys-306. Residues Thr-350–Thr-360 are compositionally biased toward low complexity. Polar residues predominate over residues Ala-361–Ala-378. The chain crosses the membrane as a helical span at residues Leu-412 to Val-433. Topologically, residues Pro-434–Asn-448 are extracellular. The chain crosses the membrane as a helical span at residues Phe-449–Leu-470. Over Asp-471–Thr-484 the chain is Cytoplasmic.

It belongs to the G-protein coupled receptor 1 family.

The protein resides in the cell membrane. Its function is as follows. G-protein coupled receptor for tyramine, a known neurotransmitter and neuromodulator and direct precursor of octopamine. The protein is Putative tyramine receptor 2 (GCR2) of Locusta migratoria (Migratory locust).